The following is a 149-amino-acid chain: Glutamate mutase sigma subunit (149 aa).

In terms of domain architecture, B12-binding spans 5 to 138; the sequence is DPTVVLGTIG…DAVKTELDVD (134 aa). Residues 15–19, H18, 63–65, and 94–98 contribute to the adenosylcob(III)alamin site; these read SDAHA, SSL, and NLAVG.

It belongs to the methylaspartate mutase GlmS subunit family. In terms of assembly, heterotetramer composed of 2 epsilon subunits (GlmE) and 2 sigma subunits (GlmS). GlmE exists as a homodimer and GlmS as a monomer. Adenosylcob(III)alamin is required as a cofactor.

It carries out the reaction (2S,3S)-3-methyl-L-aspartate = L-glutamate. Its pathway is amino-acid degradation; L-glutamate degradation via mesaconate pathway; acetate and pyruvate from L-glutamate: step 1/4. In terms of biological role, catalyzes the carbon skeleton rearrangement of L-glutamate to L-threo-3-methylaspartate ((2S,3S)-3-methylaspartate). This chain is Glutamate mutase sigma subunit, found in Halobacterium salinarum (strain ATCC 700922 / JCM 11081 / NRC-1) (Halobacterium halobium).